The primary structure comprises 236 residues: Penton protein H240R (236 aa).

The protein belongs to the asfivirus H240R family.

Its subcellular location is the virion. Its function is as follows. Forms the penton at the fivefold vertices of the icosahedral capsid. Together with the minor capsid proteins (p17, p49, and M1249L), forms a complicated network immediately below the outer capsid shell, stabilizing the whole capsid. The sequence is that of Penton protein H240R from African swine fever virus (isolate Pig/Kenya/KEN-50/1950) (ASFV).